Consider the following 1012-residue polypeptide: DNA polymerase catalytic subunit (1012 aa).

The protein belongs to the DNA polymerase type-B family.

The protein resides in the host nucleus. It carries out the reaction DNA(n) + a 2'-deoxyribonucleoside 5'-triphosphate = DNA(n+1) + diphosphate. This Homo sapiens (Human) protein is DNA polymerase catalytic subunit (U38).